The primary structure comprises 73 residues: Conotoxin ArMKLT2-022 (73 aa).

A signal peptide spans 1 to 22 (MKLTCVLIIAVLFLTACQLTTG). A propeptide spanning residues 23-40 (EQKDHAQRSADRNSKLTR) is cleaved from the precursor. A Pyrrolidone carboxylic acid modification is found at Gln-41. Disulfide bonds link Cys-42–Cys-56, Cys-49–Cys-60, and Cys-55–Cys-67.

It belongs to the conotoxin O1 superfamily. As to expression, expressed by the venom duct.

The protein localises to the secreted. This Conus arenatus (Sand-dusted cone) protein is Conotoxin ArMKLT2-022.